The following is a 454-amino-acid chain: tRNA modification GTPase MnmE (454 aa).

R23, E80, and K120 together coordinate (6S)-5-formyl-5,6,7,8-tetrahydrofolate. Positions 216-377 (GMKVVIAGRP…LRNNLKQSMG (162 aa)) constitute a TrmE-type G domain. Residue N226 coordinates K(+). Residues 226 to 231 (NAGKSS), 245 to 251 (TDIAGTT), 270 to 273 (DTAG), 335 to 338 (NKAD), and 358 to 360 (SAR) contribute to the GTP site. A Mg(2+)-binding site is contributed by S230. Positions 245, 247, and 250 each coordinate K(+). T251 contributes to the Mg(2+) binding site. K454 provides a ligand contact to (6S)-5-formyl-5,6,7,8-tetrahydrofolate.

Belongs to the TRAFAC class TrmE-Era-EngA-EngB-Septin-like GTPase superfamily. TrmE GTPase family. As to quaternary structure, homodimer. Heterotetramer of two MnmE and two MnmG subunits. K(+) serves as cofactor.

It localises to the cytoplasm. Exhibits a very high intrinsic GTPase hydrolysis rate. Involved in the addition of a carboxymethylaminomethyl (cmnm) group at the wobble position (U34) of certain tRNAs, forming tRNA-cmnm(5)s(2)U34. This is tRNA modification GTPase MnmE from Salmonella paratyphi A (strain ATCC 9150 / SARB42).